The sequence spans 206 residues: Thymidylate kinase (206 aa).

11-18 (GIDGAGKT) is an ATP binding site.

This sequence belongs to the thymidylate kinase family.

The enzyme catalyses dTMP + ATP = dTDP + ADP. Functionally, phosphorylation of dTMP to form dTDP in both de novo and salvage pathways of dTTP synthesis. The chain is Thymidylate kinase from Burkholderia cenocepacia (strain ATCC BAA-245 / DSM 16553 / LMG 16656 / NCTC 13227 / J2315 / CF5610) (Burkholderia cepacia (strain J2315)).